Consider the following 355-residue polypeptide: Holliday junction branch migration complex subunit RuvB (355 aa).

The interval 1-43 is disordered; that stretch reads MEEMDDFTVRRGEREDITGAAGPPEERPLDPAAFEEDDEPTLR. Residues 4-203 form a large ATPase domain (RuvB-L) region; the sequence is MDDFTVRRGE…FGFSARLDYY (200 aa). Positions 7–17 are enriched in basic and acidic residues; sequence FTVRRGEREDI. ATP contacts are provided by residues leucine 42, arginine 43, glycine 84, lysine 87, threonine 88, serine 89, 150–152, arginine 193, tyrosine 203, and arginine 240; that span reads EDF. Threonine 88 contributes to the Mg(2+) binding site. Residues 204–274 form a small ATPAse domain (RuvB-S) region; it reads EPHELEKIVV…TANAALEMQG (71 aa). Positions 277–355 are head domain (RuvB-H); it reads HLGLDRTDRE…HLGFPVRDGG (79 aa). Residues arginine 313, arginine 332, and arginine 337 each coordinate DNA.

It belongs to the RuvB family. In terms of assembly, homohexamer. Forms an RuvA(8)-RuvB(12)-Holliday junction (HJ) complex. HJ DNA is sandwiched between 2 RuvA tetramers; dsDNA enters through RuvA and exits via RuvB. An RuvB hexamer assembles on each DNA strand where it exits the tetramer. Each RuvB hexamer is contacted by two RuvA subunits (via domain III) on 2 adjacent RuvB subunits; this complex drives branch migration. In the full resolvosome a probable DNA-RuvA(4)-RuvB(12)-RuvC(2) complex forms which resolves the HJ.

The protein localises to the cytoplasm. It catalyses the reaction ATP + H2O = ADP + phosphate + H(+). Its function is as follows. The RuvA-RuvB-RuvC complex processes Holliday junction (HJ) DNA during genetic recombination and DNA repair, while the RuvA-RuvB complex plays an important role in the rescue of blocked DNA replication forks via replication fork reversal (RFR). RuvA specifically binds to HJ cruciform DNA, conferring on it an open structure. The RuvB hexamer acts as an ATP-dependent pump, pulling dsDNA into and through the RuvAB complex. RuvB forms 2 homohexamers on either side of HJ DNA bound by 1 or 2 RuvA tetramers; 4 subunits per hexamer contact DNA at a time. Coordinated motions by a converter formed by DNA-disengaged RuvB subunits stimulates ATP hydrolysis and nucleotide exchange. Immobilization of the converter enables RuvB to convert the ATP-contained energy into a lever motion, pulling 2 nucleotides of DNA out of the RuvA tetramer per ATP hydrolyzed, thus driving DNA branch migration. The RuvB motors rotate together with the DNA substrate, which together with the progressing nucleotide cycle form the mechanistic basis for DNA recombination by continuous HJ branch migration. Branch migration allows RuvC to scan DNA until it finds its consensus sequence, where it cleaves and resolves cruciform DNA. In Rubrobacter xylanophilus (strain DSM 9941 / JCM 11954 / NBRC 16129 / PRD-1), this protein is Holliday junction branch migration complex subunit RuvB.